Consider the following 283-residue polypeptide: Thymidylate synthase (283 aa).

Arginine 22 provides a ligand contact to dUMP. Cysteine 160 (nucleophile) is an active-site residue. DUMP contacts are provided by residues 180-183 (RSCD), asparagine 191, and 221-223 (HIY). Aspartate 183 contributes to the (6R)-5,10-methylene-5,6,7,8-tetrahydrofolate binding site. Residue serine 282 participates in (6R)-5,10-methylene-5,6,7,8-tetrahydrofolate binding.

Belongs to the thymidylate synthase family. Bacterial-type ThyA subfamily. As to quaternary structure, homodimer.

It is found in the cytoplasm. The enzyme catalyses dUMP + (6R)-5,10-methylene-5,6,7,8-tetrahydrofolate = 7,8-dihydrofolate + dTMP. It functions in the pathway pyrimidine metabolism; dTTP biosynthesis. Functionally, catalyzes the reductive methylation of 2'-deoxyuridine-5'-monophosphate (dUMP) to 2'-deoxythymidine-5'-monophosphate (dTMP) while utilizing 5,10-methylenetetrahydrofolate (mTHF) as the methyl donor and reductant in the reaction, yielding dihydrofolate (DHF) as a by-product. This enzymatic reaction provides an intracellular de novo source of dTMP, an essential precursor for DNA biosynthesis. The protein is Thymidylate synthase of Vibrio atlanticus (strain LGP32) (Vibrio splendidus (strain Mel32)).